Reading from the N-terminus, the 353-residue chain is 11-beta-hydroxysteroid dehydrogenase B (353 aa).

Residues 10–30 (LFVPPASLITLAFSWPALCFP) form a helical; Signal-anchor for type II membrane protein membrane-spanning segment. The short motif at 13-26 (PPASLITLAFSWPA) is the Proline-knob element. Residues 54–80 (GASS…VARR) and aspartate 105 contribute to the NADP(+) site. Serine 184 contacts substrate. The active-site Proton acceptor is tyrosine 197. NADP(+) contacts are provided by residues 197-201 (YAAAK) and lysine 201.

The protein belongs to the short-chain dehydrogenases/reductases (SDR) family. Expressed in seeds (at protein level).

It localises to the lipid droplet. The protein resides in the membrane. It catalyses the reaction an 11beta-hydroxysteroid + NADP(+) = an 11-oxosteroid + NADPH + H(+). Its function is as follows. Has dehydrogenase activity against 11 beta-hydroxysteroid and 17 beta-hydroxysteroid. May be involved in signal transduction regulated by various sterols. This is 11-beta-hydroxysteroid dehydrogenase B from Arachis hypogaea (Peanut).